The sequence spans 130 residues: Small ribosomal subunit protein uS8 (130 aa).

The protein belongs to the universal ribosomal protein uS8 family. As to quaternary structure, part of the 30S ribosomal subunit. Contacts proteins S5 and S12.

In terms of biological role, one of the primary rRNA binding proteins, it binds directly to 16S rRNA central domain where it helps coordinate assembly of the platform of the 30S subunit. This is Small ribosomal subunit protein uS8 from Alcanivorax borkumensis (strain ATCC 700651 / DSM 11573 / NCIMB 13689 / SK2).